The sequence spans 616 residues: Chaperone protein HscA homolog (616 aa).

Belongs to the heat shock protein 70 family.

In terms of biological role, chaperone involved in the maturation of iron-sulfur cluster-containing proteins. Has a low intrinsic ATPase activity which is markedly stimulated by HscB. The sequence is that of Chaperone protein HscA homolog from Vibrio cholerae serotype O1 (strain M66-2).